The primary structure comprises 117 residues: Transcription elongation factor A protein-like 8 (117 aa).

The interval 1–81 (MQKSCDENEG…PEEVIRGVDE (81 aa)) is disordered. Over residues 41–81 (NVREETDGSLRGEPAEPSPEPKEDTPARHLNPEEVIRGVDE) the composition is skewed to basic and acidic residues. Residues 73-100 (EEVIRGVDELERLREEIRRVRNKFVLMH) adopt a coiled-coil conformation.

This sequence belongs to the TFS-II family. TFA subfamily. In terms of tissue distribution, highly expressed in kidney. Moderately expressed in heart and lung. Low expression in brain and liver. Expression is up-regulated in nephrectomized kidney.

It localises to the nucleus. Its function is as follows. May be involved in transcriptional regulation. This chain is Transcription elongation factor A protein-like 8 (Tceal8), found in Rattus norvegicus (Rat).